The sequence spans 238 residues: MTPHINAPEGAFADVVLMPGDPLRAKYIAETFLQDVVEVTNVRNMLGFTGTYKGRKISIMGHGMGIPSCSIYAKELITEYGVKKIIRVGSCGTVRMDVKVRDVIIGLGACTDSKVNRIRFKDNDFAAIADFDMAQAAVQAAKAKGKVVRVGNLFSADLFYTPDVEMFDVMEKYGILGVEMEAAGIYGVAAEYGAKALTICTVSDHIRTHEQTTAEERQLTFNDMIEIALDSVLIGDAL.

His4 contributes to the a purine D-ribonucleoside binding site. Residues Gly20, Arg24, Arg43, and Arg87–Ser90 contribute to the phosphate site. Residues Glu179 to Glu181 and Ser203 to Asp204 each bind a purine D-ribonucleoside. Asp204 serves as the catalytic Proton donor.

Belongs to the PNP/UDP phosphorylase family. In terms of assembly, homohexamer; trimer of homodimers.

The catalysed reaction is a purine D-ribonucleoside + phosphate = a purine nucleobase + alpha-D-ribose 1-phosphate. It carries out the reaction a purine 2'-deoxy-D-ribonucleoside + phosphate = a purine nucleobase + 2-deoxy-alpha-D-ribose 1-phosphate. In terms of biological role, catalyzes the reversible phosphorolytic breakdown of the N-glycosidic bond in the beta-(deoxy)ribonucleoside molecules, with the formation of the corresponding free purine bases and pentose-1-phosphate. The chain is Purine nucleoside phosphorylase DeoD-type from Haemophilus influenzae (strain 86-028NP).